The following is a 230-amino-acid chain: Dephospho-CoA kinase (230 aa).

The DPCK domain occupies 3-225; it reads IIGLTGGIAT…REGGAICPTP (223 aa). 11-16 is an ATP binding site; sequence ATGKST.

This sequence belongs to the CoaE family.

The protein localises to the cytoplasm. The catalysed reaction is 3'-dephospho-CoA + ATP = ADP + CoA + H(+). It functions in the pathway cofactor biosynthesis; coenzyme A biosynthesis; CoA from (R)-pantothenate: step 5/5. Functionally, catalyzes the phosphorylation of the 3'-hydroxyl group of dephosphocoenzyme A to form coenzyme A. This is Dephospho-CoA kinase from Synechococcus sp. (strain JA-3-3Ab) (Cyanobacteria bacterium Yellowstone A-Prime).